The following is a 207-amino-acid chain: Cytochrome c biogenesis ATP-binding export protein CcmA (207 aa).

In terms of domain architecture, ABC transporter spans 4 to 207; that stretch reads LEARELLCER…RISLTQTRAA (204 aa). 36 to 43 serves as a coordination point for ATP; it reads GSNGAGKT.

This sequence belongs to the ABC transporter superfamily. CcmA exporter (TC 3.A.1.107) family. In terms of assembly, the complex is composed of two ATP-binding proteins (CcmA) and two transmembrane proteins (CcmB).

The protein resides in the cell inner membrane. The catalysed reaction is heme b(in) + ATP + H2O = heme b(out) + ADP + phosphate + H(+). Its function is as follows. Part of the ABC transporter complex CcmAB involved in the biogenesis of c-type cytochromes; once thought to export heme, this seems not to be the case, but its exact role is uncertain. Responsible for energy coupling to the transport system. This is Cytochrome c biogenesis ATP-binding export protein CcmA from Shigella sonnei (strain Ss046).